Consider the following 225-residue polypeptide: 3-dehydroquinate dehydratase (225 aa).

Residues 30 to 32 (EWR) and arginine 62 each bind 3-dehydroquinate. Histidine 118 serves as the catalytic Proton donor/acceptor. Lysine 143 serves as the catalytic Schiff-base intermediate with substrate. 3-dehydroquinate contacts are provided by arginine 186, serine 205, and glutamine 209.

The protein belongs to the type-I 3-dehydroquinase family. Homodimer.

The catalysed reaction is 3-dehydroquinate = 3-dehydroshikimate + H2O. Its pathway is metabolic intermediate biosynthesis; chorismate biosynthesis; chorismate from D-erythrose 4-phosphate and phosphoenolpyruvate: step 3/7. In terms of biological role, involved in the third step of the chorismate pathway, which leads to the biosynthesis of aromatic amino acids. Catalyzes the cis-dehydration of 3-dehydroquinate (DHQ) and introduces the first double bond of the aromatic ring to yield 3-dehydroshikimate. The polypeptide is 3-dehydroquinate dehydratase (Streptococcus thermophilus (strain ATCC BAA-250 / LMG 18311)).